A 382-amino-acid chain; its full sequence is Serine/threonine-protein phosphatase 2A activator 2 (382 aa).

The disordered stretch occupies residues 363–382 (SHKGVPTLGNRPGIKPIPFD).

This sequence belongs to the PTPA-type PPIase family.

It localises to the cytoplasm. The enzyme catalyses [protein]-peptidylproline (omega=180) = [protein]-peptidylproline (omega=0). Its function is as follows. PPIases accelerate the folding of proteins. It catalyzes the cis-trans isomerization of proline imidic peptide bonds in oligopeptides. Acts as a regulatory subunit for PP2A-like phosphatases modulating their activity or substrate specificity, probably by inducing a conformational change in the catalytic subunit, a direct target of the PPIase. Can reactivate inactive phosphatase PP2A-phosphatase methylesterase complexes (PP2Ai) in presence of ATP and Mg(2+) by dissociating the inactive form from the complex. The chain is Serine/threonine-protein phosphatase 2A activator 2 (RRD2) from Cryptococcus neoformans var. neoformans serotype D (strain B-3501A) (Filobasidiella neoformans).